Consider the following 576-residue polypeptide: Arginine--tRNA ligase (576 aa).

The 'HIGH' region motif lies at 122-132 (PNVAKEMHVGH).

Belongs to the class-I aminoacyl-tRNA synthetase family. Monomer.

It is found in the cytoplasm. It carries out the reaction tRNA(Arg) + L-arginine + ATP = L-arginyl-tRNA(Arg) + AMP + diphosphate. This chain is Arginine--tRNA ligase, found in Sodalis glossinidius (strain morsitans).